We begin with the raw amino-acid sequence, 473 residues long: Photosystem II CP43 reaction center protein (473 aa).

A propeptide spanning residues 1–14 (MKTLYSLRRFYPVE) is cleaved from the precursor. An N-acetylthreonine modification is found at threonine 15. Threonine 15 carries the post-translational modification Phosphothreonine. 5 consecutive transmembrane segments (helical) span residues 69–93 (LFEVAHFVPEKPMYEQGLILLPHLA), 134–155 (LLGPETLEESFPFFGYVWKDRN), 178–200 (KALYFGGVYDTWAPGGGDVRKIT), 255–275 (KPFAWARRAFVWSGEAYLSYS), and 291–312 (WFNNTAYPSEFYGPTGPEASQA). Glutamate 367 contributes to the [CaMn4O5] cluster binding site. Residues 447–471 (RARAAAAGFEKGIDRDFEPVLSMTP) traverse the membrane as a helical segment.

This sequence belongs to the PsbB/PsbC family. PsbC subfamily. As to quaternary structure, PSII is composed of 1 copy each of membrane proteins PsbA, PsbB, PsbC, PsbD, PsbE, PsbF, PsbH, PsbI, PsbJ, PsbK, PsbL, PsbM, PsbT, PsbX, PsbY, PsbZ, Psb30/Ycf12, at least 3 peripheral proteins of the oxygen-evolving complex and a large number of cofactors. It forms dimeric complexes. It depends on Binds multiple chlorophylls and provides some of the ligands for the Ca-4Mn-5O cluster of the oxygen-evolving complex. It may also provide a ligand for a Cl- that is required for oxygen evolution. PSII binds additional chlorophylls, carotenoids and specific lipids. as a cofactor.

The protein localises to the plastid. The protein resides in the chloroplast thylakoid membrane. Functionally, one of the components of the core complex of photosystem II (PSII). It binds chlorophyll and helps catalyze the primary light-induced photochemical processes of PSII. PSII is a light-driven water:plastoquinone oxidoreductase, using light energy to abstract electrons from H(2)O, generating O(2) and a proton gradient subsequently used for ATP formation. This Piper cenocladum (Ant piper) protein is Photosystem II CP43 reaction center protein.